The chain runs to 506 residues: Cationic amino acid transporter 8 (506 aa).

Asn2 and Asn5 each carry an N-linked (GlcNAc...) asparagine glycan. Residues 38–58 (FYLLLIIIIYTATSACIYFDW) traverse the membrane as a helical segment. Asn75 is a glycosylation site (N-linked (GlcNAc...) asparagine). 5 consecutive transmembrane segments (helical) span residues 93–113 (NLYPMTLAIHFTMSVFCGFLY), 116–136 (IGPKFTAIIGQGFNILSWIFL), 147–167 (LIGFIFLGLGADTAFIPILTV), 174–194 (ISTFIMTVIGAAASLSYAVPA), and 211–231 (ICYGYIFIILIPCLLVATFLL). The N-linked (GlcNAc...) asparagine glycan is linked to Asn277. The chain crosses the membrane as a helical span at residues 302-322 (ILLFFKVLLSYPSICIIVYFI). Asn325 and Asn342 each carry an N-linked (GlcNAc...) asparagine glycan. A run of 4 helical transmembrane segments spans residues 344–364 (SIINIINILMPISFIPCIIFG), 372–392 (AAIIIIIMNAFSALMHLTALI), 399–419 (LISAFLYMCAASIYTSQIYCF), and 427–447 (VVFGKLLGITSLFGGMFSLFC). 2 N-linked (GlcNAc...) asparagine glycosylation sites follow: Asn453 and Asn456. Residues 466-486 (TISILLAISFIIMFLPLSILY) traverse the membrane as a helical segment.

Belongs to the SLC43A transporter (TC 2.A.1.44) family.

It is found in the cell membrane. Its function is as follows. Cationic amino acid transporter which transports L-arginine, L-lysine and, to a lesser extent, L-histidine and ornithine. Plays an essential role in gametogenesis. The chain is Cationic amino acid transporter 8 from Plasmodium berghei (strain Anka).